Here is a 188-residue protein sequence, read N- to C-terminus: dCTP deaminase (188 aa).

Residues 111–116 (KSTYAR), 135–137 (TLE), glutamine 156, tyrosine 170, and glutamine 180 each bind dCTP. The Proton donor/acceptor role is filled by glutamate 137.

Belongs to the dCTP deaminase family. Homotrimer.

The catalysed reaction is dCTP + H2O + H(+) = dUTP + NH4(+). Its pathway is pyrimidine metabolism; dUMP biosynthesis; dUMP from dCTP (dUTP route): step 1/2. Catalyzes the deamination of dCTP to dUTP. The chain is dCTP deaminase from Polaromonas sp. (strain JS666 / ATCC BAA-500).